The sequence spans 37 residues: MIEVFLFGIVLGLIPVTLAGLFVTAYLQYRRGDQSDL.

The helical transmembrane segment at 5–25 threads the bilayer; that stretch reads FLFGIVLGLIPVTLAGLFVTA.

The protein belongs to the PetG family. In terms of assembly, the 4 large subunits of the cytochrome b6-f complex are cytochrome b6, subunit IV (17 kDa polypeptide, PetD), cytochrome f and the Rieske protein, while the 4 small subunits are PetG, PetL, PetM and PetN. The complex functions as a dimer.

The protein localises to the plastid. It is found in the chloroplast thylakoid membrane. Component of the cytochrome b6-f complex, which mediates electron transfer between photosystem II (PSII) and photosystem I (PSI), cyclic electron flow around PSI, and state transitions. PetG is required for either the stability or assembly of the cytochrome b6-f complex. The protein is Cytochrome b6-f complex subunit 5 of Daucus carota (Wild carrot).